We begin with the raw amino-acid sequence, 450 residues long: Phosphoglucosamine mutase (450 aa).

Ser-101 acts as the Phosphoserine intermediate in catalysis. Ser-101, Asp-240, Asp-242, and Asp-244 together coordinate Mg(2+). Residue Ser-101 is modified to Phosphoserine.

The protein belongs to the phosphohexose mutase family. It depends on Mg(2+) as a cofactor. Post-translationally, activated by phosphorylation.

It catalyses the reaction alpha-D-glucosamine 1-phosphate = D-glucosamine 6-phosphate. Its function is as follows. Catalyzes the conversion of glucosamine-6-phosphate to glucosamine-1-phosphate. In Streptococcus thermophilus (strain CNRZ 1066), this protein is Phosphoglucosamine mutase.